The primary structure comprises 158 residues: UPF0336 protein Mb0654 (158 aa).

Belongs to the UPF0336 family.

This Mycobacterium bovis (strain ATCC BAA-935 / AF2122/97) protein is UPF0336 protein Mb0654.